The following is a 370-amino-acid chain: NSFL1 cofactor p47 (370 aa).

A disordered region spans residues 54-73 (SQATPSSVSRGTAPSDNRVT). A phosphoserine mark is found at Ser-74, Ser-102, and Ser-114. Disordered regions lie at residues 80–116 (HDQDEDEEEEEGQRFYAGGSERSGQQIVGPPRKRSPN) and 137–157 (VTKSPGETSKPRPFAGGGYRL). Residues 109–115 (PPRKRSP) carry the Nuclear localization signal motif. Ser-140 is subject to Phosphoserine; by CDK1. Tyr-167 bears the Phosphotyrosine mark. The short motif at 172–175 (RRRH) is the Nuclear localization signal element. Phosphoserine is present on residues Ser-176, Ser-192, and Ser-272. In terms of domain architecture, SEP spans 179–244 (DVHVVLKLWK…MEDHRDEDFV (66 aa)). The disordered stretch occupies residues 272–292 (SPAQQAENEAKASSSISIDES). The UBX domain occupies 291-368 (ESQPTTNIQI…NLLNAVIVQR (78 aa)).

Part of a ternary complex containing STX5A, NSFL1C and VCP. NSFL1C forms a homotrimer that binds to one end of a VCP homohexamer. The complex binds to membranes enriched in phosphatidylethanolamine-containing lipids and promotes Golgi membrane fusion. Interaction with VCIP135 leads to dissociation of the complex via ATP hydrolysis by VCP. Binds ubiquitin and mono-ubiquitinated proteins via its N-terminal UBA-like domain when bound to VCP. Phosphorylated during mitosis. Phosphorylation inhibits interaction with Golgi membranes and is required for the fragmentation of the Golgi stacks during mitosis.

The protein resides in the nucleus. The protein localises to the golgi apparatus. It is found in the golgi stack. It localises to the chromosome. Its subcellular location is the cytoplasm. The protein resides in the cytoskeleton. The protein localises to the microtubule organizing center. It is found in the centrosome. Its function is as follows. Reduces the ATPase activity of VCP. Necessary for the fragmentation of Golgi stacks during mitosis and for VCP-mediated reassembly of Golgi stacks after mitosis. May play a role in VCP-mediated formation of transitional endoplasmic reticulum (tER). Inhibits the activity of CTSL (in vitro). Together with UBXN2B/p37, regulates the centrosomal levels of kinase AURKA/Aurora A during mitotic progression by promoting AURKA removal from centrosomes in prophase. Also, regulates spindle orientation during mitosis. In Bos taurus (Bovine), this protein is NSFL1 cofactor p47 (NSFL1C).